Reading from the N-terminus, the 91-residue chain is Gem-associated protein 7 homolog (91 aa).

The Sm domain occupies 18–86 (LKFYQKMASA…VVGIEYNLVQ (69 aa)).

Belongs to the gemin-7 family. Part of the core SMN complex at least composed of smn1, yip11/gem2, gem6, gem7 and gem8. Interacts with gem6; the interaction is direct. Interacts with gem8; the interaction is direct.

This chain is Gem-associated protein 7 homolog, found in Schizosaccharomyces pombe (strain 972 / ATCC 24843) (Fission yeast).